A 334-amino-acid chain; its full sequence is Holliday junction branch migration complex subunit RuvB (334 aa).

The large ATPase domain (RuvB-L) stretch occupies residues 4–184 (ADRLIQPQLQ…FGIPLRLEFY (181 aa)). Residues Arg24, Gly65, Lys68, Thr69, Thr70, 131-133 (EDY), Arg174, Tyr184, and Arg221 contribute to the ATP site. Thr69 serves as a coordination point for Mg(2+). A small ATPAse domain (RuvB-S) region spans residues 185–255 (NVKDLSTIVT…VAEHALDLLD (71 aa)). The interval 258 to 334 (GEGFDYMDRK…YLHFGMIKPE (77 aa)) is head domain (RuvB-H). DNA is bound by residues Arg294, Arg313, and Arg318.

The protein belongs to the RuvB family. In terms of assembly, homohexamer. Forms an RuvA(8)-RuvB(12)-Holliday junction (HJ) complex. HJ DNA is sandwiched between 2 RuvA tetramers; dsDNA enters through RuvA and exits via RuvB. An RuvB hexamer assembles on each DNA strand where it exits the tetramer. Each RuvB hexamer is contacted by two RuvA subunits (via domain III) on 2 adjacent RuvB subunits; this complex drives branch migration. In the full resolvosome a probable DNA-RuvA(4)-RuvB(12)-RuvC(2) complex forms which resolves the HJ.

It is found in the cytoplasm. The catalysed reaction is ATP + H2O = ADP + phosphate + H(+). Functionally, the RuvA-RuvB-RuvC complex processes Holliday junction (HJ) DNA during genetic recombination and DNA repair, while the RuvA-RuvB complex plays an important role in the rescue of blocked DNA replication forks via replication fork reversal (RFR). RuvA specifically binds to HJ cruciform DNA, conferring on it an open structure. The RuvB hexamer acts as an ATP-dependent pump, pulling dsDNA into and through the RuvAB complex. RuvB forms 2 homohexamers on either side of HJ DNA bound by 1 or 2 RuvA tetramers; 4 subunits per hexamer contact DNA at a time. Coordinated motions by a converter formed by DNA-disengaged RuvB subunits stimulates ATP hydrolysis and nucleotide exchange. Immobilization of the converter enables RuvB to convert the ATP-contained energy into a lever motion, pulling 2 nucleotides of DNA out of the RuvA tetramer per ATP hydrolyzed, thus driving DNA branch migration. The RuvB motors rotate together with the DNA substrate, which together with the progressing nucleotide cycle form the mechanistic basis for DNA recombination by continuous HJ branch migration. Branch migration allows RuvC to scan DNA until it finds its consensus sequence, where it cleaves and resolves cruciform DNA. The chain is Holliday junction branch migration complex subunit RuvB from Shewanella sp. (strain MR-4).